A 488-amino-acid polypeptide reads, in one-letter code: Bifunctional protein HldE (488 aa).

The segment at 1–331 is ribokinase; the sequence is MTELSALVER…VALHREDLTL (331 aa). 206–209 contacts ATP; the sequence is NRKE. Residue Asp-276 is part of the active site. Positions 358 to 488 are cytidylyltransferase; the sequence is FTNGCFDLLH…TNTIKKMNGN (131 aa).

It in the N-terminal section; belongs to the carbohydrate kinase PfkB family. This sequence in the C-terminal section; belongs to the cytidylyltransferase family. Homodimer.

It catalyses the reaction D-glycero-beta-D-manno-heptose 7-phosphate + ATP = D-glycero-beta-D-manno-heptose 1,7-bisphosphate + ADP + H(+). The catalysed reaction is D-glycero-beta-D-manno-heptose 1-phosphate + ATP + H(+) = ADP-D-glycero-beta-D-manno-heptose + diphosphate. Its pathway is nucleotide-sugar biosynthesis; ADP-L-glycero-beta-D-manno-heptose biosynthesis; ADP-L-glycero-beta-D-manno-heptose from D-glycero-beta-D-manno-heptose 7-phosphate: step 1/4. It functions in the pathway nucleotide-sugar biosynthesis; ADP-L-glycero-beta-D-manno-heptose biosynthesis; ADP-L-glycero-beta-D-manno-heptose from D-glycero-beta-D-manno-heptose 7-phosphate: step 3/4. In terms of biological role, catalyzes the phosphorylation of D-glycero-D-manno-heptose 7-phosphate at the C-1 position to selectively form D-glycero-beta-D-manno-heptose-1,7-bisphosphate. Its function is as follows. Catalyzes the ADP transfer from ATP to D-glycero-beta-D-manno-heptose 1-phosphate, yielding ADP-D-glycero-beta-D-manno-heptose. The polypeptide is Bifunctional protein HldE (Paramagnetospirillum magneticum (strain ATCC 700264 / AMB-1) (Magnetospirillum magneticum)).